Reading from the N-terminus, the 249-residue chain is Short-chain dehydrogenase virB (249 aa).

I16, R104, Y150, K154, V183, and T185 together coordinate NADP(+). The active-site Proton donor is Y150. Catalysis depends on K154, which acts as the Lowers pKa of active site Tyr.

It belongs to the short-chain dehydrogenases/reductases (SDR) family.

It functions in the pathway secondary metabolite biosynthesis. Its function is as follows. Short-chain dehydrogenase; part of the gene cluster that mediates the biosynthesis of virensols and trichoxide, fungal natural products that contain or are derived from a salicylaldehyde core. The pathway begins with the synthesis of the reduced chain in virensol C by the highly reducing polyketide synthase virA via condensation of one acetate and 8 malonate units. VirA has interesting programming rules since the first 2 ketides are fully reduced, the 3 following ketides undergo beta-dehydration, and the last 3 ketides are only reduced to beta-hydroxys to yield the trihydroxy portion. The production of aldehyde virensol C by virA alone is surprising, since virA does not contain a reductase (R) domain that is typically associated with reductive product release in HRPKS. The cupin-domain enzyme virC is involved in enhancing virA product turnover. The short-chain dehydrogenase virB then oxidizes the C-7 alcohol of virensol C to a ketone, yielding virensol D. Virensol D is further transformed to salicylaldehyde 5-deoxyaurocitrin by the short-chain dehydrogenase virD. VirD catalyzes the dehydrogenation of C-3 to form the beta-ketone aldehyde, which is followed by the generation of the nucleophilic C-2 that is required for the intramolecular aldol condensation between C-2 and C-7, itself followed by dehydration and aromatization which leads to salicylaldehyde 5-deoxyaurocitrin. While the dehydrogenation of virensol D is definitely catalyzed by virD, the aldol condensation and dehydration may be uncatalyzed or assisted by virD. The short chain dehydrogenase virG then converts salicylaldehyde 5-deoxyaurocitrin into virensol B which is further hydroxylated by the cytochrome P450 monooxygenase virE to yield the hydroquinone virensol A. VirI then may oxidize virensol A to form the quinone, while virH performs the epoxidation. Finally, the two remaining short-chain dehydrogenases, virK and virL, are probably responsible for reducing the ketones to the corresponding alcohols to furnish the epoxycyclohexanol structure in trichoxide. The protein is Short-chain dehydrogenase virB of Hypocrea virens (strain Gv29-8 / FGSC 10586) (Gliocladium virens).